Consider the following 102-residue polypeptide: PqqA binding protein (102 aa).

This sequence belongs to the PqqD family. As to quaternary structure, monomer. Interacts with PqqE.

It functions in the pathway cofactor biosynthesis; pyrroloquinoline quinone biosynthesis. In terms of biological role, functions as a PqqA binding protein and presents PqqA to PqqE, in the pyrroloquinoline quinone (PQQ) biosynthetic pathway. The chain is PqqA binding protein from Rhodopseudomonas palustris (strain TIE-1).